The following is a 359-amino-acid chain: MSTILFYTRALIIGATKSQGVFGKTGTLVANISSNRGIISIVPRTNPPQKLLKMQEEENSLLEEARKVVPALSFGKHKGQAGRVGVIGGSEEYTGAPYFAAISAMKAGADLAHVFCSKSASTVIKSYSPELIVHPLLDVPNAVTLLDEWLPRIHSHVIGPGLGRVDATLNTVKEILIKLKKQEIPIVIDADGLFLITRDPSIIHGYTKAILTPNVVEFQRLSKSMNLNWESKDLNGSIMETVALSKALGGVTIVRKGEVDIVAAGDEVVTMDEIGSPRRCGGQGDLLSGVMALFSYWTHNSTCTPPPTLLAGYAACFLTKRCANQAFQKHGRSTATTDLISEINSVFVNNFENPTDPKS.

In terms of domain architecture, YjeF C-terminal spans 61–350 (LLEEARKVVP…SEINSVFVNN (290 aa)). (6S)-NADPHX is bound by residues Gly161 and 214–220 (NVVEFQR). ATP-binding positions include 256–260 (KGEVD) and 275–284 (GSPRRCGGQG). Position 285 (Asp285) interacts with (6S)-NADPHX.

It belongs to the NnrD/CARKD family. Mg(2+) serves as cofactor.

It catalyses the reaction (6S)-NADHX + ATP = ADP + phosphate + NADH + H(+). It carries out the reaction (6S)-NADPHX + ATP = ADP + phosphate + NADPH + H(+). In terms of biological role, catalyzes the dehydration of the S-form of NAD(P)HX at the expense of ATP, which is converted to ADP. Together with NAD(P)HX epimerase, which catalyzes the epimerization of the S- and R-forms, the enzyme allows the repair of both epimers of NAD(P)HX, a damaged form of NAD(P)H that is a result of enzymatic or heat-dependent hydration. The protein is ATP-dependent (S)-NAD(P)H-hydrate dehydratase of Ciona intestinalis (Transparent sea squirt).